An 860-amino-acid chain; its full sequence is DNA mismatch repair protein MutS (860 aa).

625-632 (GPNMGGKS) serves as a coordination point for ATP.

Belongs to the DNA mismatch repair MutS family.

Functionally, this protein is involved in the repair of mismatches in DNA. It is possible that it carries out the mismatch recognition step. This protein has a weak ATPase activity. The polypeptide is DNA mismatch repair protein MutS (Aeromonas hydrophila subsp. hydrophila (strain ATCC 7966 / DSM 30187 / BCRC 13018 / CCUG 14551 / JCM 1027 / KCTC 2358 / NCIMB 9240 / NCTC 8049)).